The chain runs to 341 residues: tRNA N6-adenosine threonylcarbamoyltransferase (341 aa).

Fe cation contacts are provided by His115 and His119. Substrate is bound by residues 137 to 141 (IVSGG), Asp170, Gly183, Asp187, and Asn276. Residue Asp304 participates in Fe cation binding.

The protein belongs to the KAE1 / TsaD family. It depends on Fe(2+) as a cofactor.

It is found in the cytoplasm. The enzyme catalyses L-threonylcarbamoyladenylate + adenosine(37) in tRNA = N(6)-L-threonylcarbamoyladenosine(37) in tRNA + AMP + H(+). Required for the formation of a threonylcarbamoyl group on adenosine at position 37 (t(6)A37) in tRNAs that read codons beginning with adenine. Is involved in the transfer of the threonylcarbamoyl moiety of threonylcarbamoyl-AMP (TC-AMP) to the N6 group of A37, together with TsaE and TsaB. TsaD likely plays a direct catalytic role in this reaction. The sequence is that of tRNA N6-adenosine threonylcarbamoyltransferase from Staphylococcus aureus (strain Mu3 / ATCC 700698).